We begin with the raw amino-acid sequence, 336 residues long: Ferredoxin--NADP reductase (336 aa).

Asp-37, Gln-45, Tyr-50, Val-90, Phe-124, Asp-286, and Thr-327 together coordinate FAD.

It belongs to the ferredoxin--NADP reductase type 2 family. As to quaternary structure, homodimer. FAD serves as cofactor.

It carries out the reaction 2 reduced [2Fe-2S]-[ferredoxin] + NADP(+) + H(+) = 2 oxidized [2Fe-2S]-[ferredoxin] + NADPH. The chain is Ferredoxin--NADP reductase from Enterococcus faecalis (strain ATCC 700802 / V583).